The following is a 522-amino-acid chain: Probable protein kinase UbiB (522 aa).

One can recognise a Protein kinase domain in the interval 119-496 (SFDADPVASA…QRRTNRLLLT (378 aa)). ATP contacts are provided by residues 125–133 (VASASIAQV) and K147. D282 serves as the catalytic Proton acceptor. A helical transmembrane segment spans residues 494-514 (LLTVFYLIGGFVAGGLFAHWI).

It belongs to the ABC1 family. UbiB subfamily.

The protein resides in the cell inner membrane. It participates in cofactor biosynthesis; ubiquinone biosynthesis [regulation]. Is probably a protein kinase regulator of UbiI activity which is involved in aerobic coenzyme Q (ubiquinone) biosynthesis. The chain is Probable protein kinase UbiB from Leptothrix cholodnii (strain ATCC 51168 / LMG 8142 / SP-6) (Leptothrix discophora (strain SP-6)).